Reading from the N-terminus, the 370-residue chain is Selenide, water dikinase 2 (370 aa).

U24 is a catalytic residue. Position 24 (U24) is a non-standard amino acid, selenocysteine. ATP-binding positions include K27, 55 to 57 (GMD), D76, and D99. Position 57 (D57) interacts with Mg(2+). 2 residues coordinate Mg(2+): D99 and D258.

It belongs to the selenophosphate synthase 1 family. Class I subfamily. In terms of assembly, homodimer. The cofactor is Mg(2+). In terms of tissue distribution, first expressed in the midgut anlagen with subsequent expression in a variety of tissues including the gut and nervous system.

It catalyses the reaction hydrogenselenide + ATP + H2O = selenophosphate + AMP + phosphate + 2 H(+). In terms of biological role, synthesizes selenophosphate from selenide and ATP. In Drosophila melanogaster (Fruit fly), this protein is Selenide, water dikinase 2 (Sps2).